Consider the following 386-residue polypeptide: Succinate--CoA ligase [ADP-forming] subunit beta (386 aa).

Residues 9–244 (KEILRKYGVP…HDEEDPLETR (236 aa)) form the ATP-grasp domain. Residues Lys-46, 53-55 (GRG), Glu-99, Cys-102, and Glu-107 contribute to the ATP site. Residues Asn-199 and Asp-213 each contribute to the Mg(2+) site. Residues Asn-264 and 321 to 323 (GIM) each bind substrate.

This sequence belongs to the succinate/malate CoA ligase beta subunit family. Heterotetramer of two alpha and two beta subunits. The cofactor is Mg(2+).

It carries out the reaction succinate + ATP + CoA = succinyl-CoA + ADP + phosphate. It catalyses the reaction GTP + succinate + CoA = succinyl-CoA + GDP + phosphate. The protein operates within carbohydrate metabolism; tricarboxylic acid cycle; succinate from succinyl-CoA (ligase route): step 1/1. In terms of biological role, succinyl-CoA synthetase functions in the citric acid cycle (TCA), coupling the hydrolysis of succinyl-CoA to the synthesis of either ATP or GTP and thus represents the only step of substrate-level phosphorylation in the TCA. The beta subunit provides nucleotide specificity of the enzyme and binds the substrate succinate, while the binding sites for coenzyme A and phosphate are found in the alpha subunit. The sequence is that of Succinate--CoA ligase [ADP-forming] subunit beta from Rickettsia massiliae (strain Mtu5).